We begin with the raw amino-acid sequence, 335 residues long: ETS translocation variant 2 (335 aa).

2 disordered regions span residues 94–138 and 201–220; these read DPWS…SWSH and GHQSPAFTTPSKSNKQSDRA. Polar residues predominate over residues 205 to 220; sequence PAFTTPSKSNKQSDRA. Residues 234-314 constitute a DNA-binding region (ETS); the sequence is IQLWQFLLEL…GGRKYTYRFG (81 aa).

The protein belongs to the ETS family. In terms of tissue distribution, testis.

It is found in the nucleus. In terms of biological role, binds to DNA sequences containing the consensus pentanucleotide 5'-CGGA[AT]-3'. In Mus musculus (Mouse), this protein is ETS translocation variant 2 (Etv2).